A 395-amino-acid polypeptide reads, in one-letter code: GA-binding protein subunit beta-1 (395 aa).

An N-acetylserine modification is found at S2. ANK repeat units follow at residues 5 to 34 (DLGK…PFTT) and 37 to 66 (LGTS…SRDA). N6-acetyllysine is present on K69. ANK repeat units follow at residues 70-99 (VDRT…DVNA), 103-132 (LKMT…DVHT), and 136-166 (FCKT…QINT). The transcription activation and HCFC1 interaction stretch occupies residues 258–327 (DGAIQQVVSS…ETVISEEPPA (70 aa)). K352 and K381 each carry N6-acetyllysine.

Heterotetramer of two alpha and two beta subunits. Interacts with HCFC1, causing repression of transcriptional activity. Acetylated by EP300/p300. Deacetylated by SIRT7, promoting heterotetramerization and activity.

It is found in the nucleus. Transcription factor capable of interacting with purine rich repeats (GA repeats). Acts as a master regulator of nuclear-encoded mitochondrial genes. Functionally, (Microbial infection) Necessary for the expression of the Adenovirus E4 gene. The chain is GA-binding protein subunit beta-1 (GABPB1) from Homo sapiens (Human).